Consider the following 83-residue polypeptide: Homeobox protein DLX-2 (83 aa).

Residues 1 to 14 (STATDSSYYTNQQH) show a composition bias toward polar residues. 2 disordered regions span residues 1–27 (STATDSSYYTNQQHPAGGGGGGASPYA) and 63–83 (PYGTSSSPVNNEPDKEDLEPE).

Belongs to the distal-less homeobox family. Interacts (via homeobox DNA-binding domain) with POU4F2; this interaction enhances retinal ganglion cell (RGC) differentiation.

The protein localises to the nucleus. Functionally, acts as a transcriptional activator. Activates transcription of CGA/alpha-GSU, via binding to the downstream activin regulatory element (DARE) in the gene promoter. Plays a role in terminal differentiation of interneurons, such as amacrine and bipolar cells in the developing retina. Likely to play a regulatory role in the development of the ventral forebrain. May play a role in craniofacial patterning and morphogenesis. The polypeptide is Homeobox protein DLX-2 (Dlx2) (Rattus norvegicus (Rat)).